We begin with the raw amino-acid sequence, 541 residues long: MAKIIAFDEEARRGLERGLNSLADAVKVTLGPKGRNVVLEKKWGAPTITNDGVSIAKEIELEDPYEKIGAELVKEVAKKTDDVAGDGTTTATVLAQALVREGLRNVAAGANPLGLKRGIEKAVEAVTAKLLDTAKEVETKEQIAATAGISAGDSTIGELIAEAMDKVGKEGVITVEESNSFGLQLELTEGMRFDKGYISLYFATDAERQEAVLEDPYILLVSSKISTVKDLLPLLEKVIQAGKPLLIIAEDVEGEALSTLVVNKIRGTFKSVAVKAPGFGDRRKAQLADIAILTGGEVVSEEVGLSLETAGIELLGRARKVVVTKDETTIVEGAGDADAIAGRVNQIRAEIEASDSDYDREKLQERLAKLAGGVAVIKAGAATEVELKERKHRIEDAVRNAKAAVEEGIVAGGGVALLQSSPVLDDLKLEGDEATGANIVKVALEAPLKQIAFNAGLEPGVVAEKVRNLPAGSGLNAATGEYEDLLAAGINDPVKVTRSALQNAASIAALFLTTEAVVADKPEKAAAPMGDPTGGMGGMDF.

ATP contacts are provided by residues Thr-29–Pro-32, Asp-86–Thr-90, Gly-413, Asn-476–Ala-478, and Asp-492.

This sequence belongs to the chaperonin (HSP60) family. In terms of assembly, forms a cylinder of 14 subunits composed of two heptameric rings stacked back-to-back. Interacts with the co-chaperonin GroES.

It is found in the cytoplasm. The catalysed reaction is ATP + H2O + a folded polypeptide = ADP + phosphate + an unfolded polypeptide.. Together with its co-chaperonin GroES, plays an essential role in assisting protein folding. The GroEL-GroES system forms a nano-cage that allows encapsulation of the non-native substrate proteins and provides a physical environment optimized to promote and accelerate protein folding. The protein is Chaperonin GroEL of Rhodococcus hoagii (Corynebacterium equii).